Here is a 120-residue protein sequence, read N- to C-terminus: Large ribosomal subunit protein uL22 (120 aa).

Belongs to the universal ribosomal protein uL22 family. In terms of assembly, part of the 50S ribosomal subunit.

This protein binds specifically to 23S rRNA; its binding is stimulated by other ribosomal proteins, e.g. L4, L17, and L20. It is important during the early stages of 50S assembly. It makes multiple contacts with different domains of the 23S rRNA in the assembled 50S subunit and ribosome. Functionally, the globular domain of the protein is located near the polypeptide exit tunnel on the outside of the subunit, while an extended beta-hairpin is found that lines the wall of the exit tunnel in the center of the 70S ribosome. This Acaryochloris marina (strain MBIC 11017) protein is Large ribosomal subunit protein uL22.